A 282-amino-acid chain; its full sequence is MAAERELDSSELPGSEALLDAVLRTLYDLGETEGETEQKRTRKKKEKKRDSETVADRAAEPLPLPASPGRDQRKSASSFFKKLREELQSAPAAPSEVPAATTAVSLFPLENDSKLVEVVEFHSRSEKRKPKSEEDKPAKNKTKVLEKDVVIQEFNLEKARLEVHRFGITGYGKGKERVLERERAIMLGAKPPKNTYVNYKVLQEQIKEKRTSMEEEKRAAQETDIFKRKKRKGRSQEDRRSKKLAPSILSSGRAAQVGKFRNGTLILSPADIKKINSSRVSK.

Disordered stretches follow at residues 27-98 (YDLG…SEVP) and 121-143 (FHSR…NKTK). Positions 48-59 (KRDSETVADRAA) are enriched in basic and acidic residues. 2 positions are modified to phosphoserine: Ser-67 and Ser-75. Over residues 89-98 (SAPAAPSEVP) the composition is skewed to low complexity. Residues 131–143 (KSEEDKPAKNKTK) show a composition bias toward basic and acidic residues. Lys-173 carries the post-translational modification N6-acetyllysine. Basic and acidic residues predominate over residues 208–226 (EKRTSMEEEKRAAQETDIF). Residues 208–254 (EKRTSMEEEKRAAQETDIFKRKKRKGRSQEDRRSKKLAPSILSSGRA) are disordered. The residue at position 268 (Ser-268) is a Phosphoserine.

As to quaternary structure, part of the small subunit (SSU) processome, composed of more than 70 proteins and the RNA chaperone small nucleolar RNA (snoRNA) U3.

Its subcellular location is the chromosome. The protein localises to the nucleus. It is found in the nucleolus. Part of the small subunit (SSU) processome, first precursor of the small eukaryotic ribosomal subunit. During the assembly of the SSU processome in the nucleolus, many ribosome biogenesis factors, an RNA chaperone and ribosomal proteins associate with the nascent pre-rRNA and work in concert to generate RNA folding, modifications, rearrangements and cleavage as well as targeted degradation of pre-ribosomal RNA by the RNA exosome. Prevents helicase DHX37 to be recruited before post-A1 state. The polypeptide is 40S small subunit processome assembly factor 1 (Rattus norvegicus (Rat)).